The primary structure comprises 614 residues: Glutamine--fructose-6-phosphate aminotransferase [isomerizing] (614 aa).

Cys-2 functions as the Nucleophile; for GATase activity in the catalytic mechanism. In terms of domain architecture, Glutamine amidotransferase type-2 spans 2 to 223; that stretch reads CGIIGYIGRR…DGEMAVVTRD (222 aa). SIS domains lie at 292–431 and 463–604; these read YLDR…GRTI and IAVK…VDRP. Catalysis depends on Lys-609, which acts as the For Fru-6P isomerization activity.

In terms of assembly, homodimer.

It is found in the cytoplasm. It carries out the reaction D-fructose 6-phosphate + L-glutamine = D-glucosamine 6-phosphate + L-glutamate. In terms of biological role, catalyzes the first step in hexosamine metabolism, converting fructose-6P into glucosamine-6P using glutamine as a nitrogen source. This is Glutamine--fructose-6-phosphate aminotransferase [isomerizing] from Chlorobaculum tepidum (strain ATCC 49652 / DSM 12025 / NBRC 103806 / TLS) (Chlorobium tepidum).